The primary structure comprises 336 residues: Aspartate--ammonia ligase (336 aa).

The protein belongs to the class-II aminoacyl-tRNA synthetase family. AsnA subfamily.

Its subcellular location is the cytoplasm. It carries out the reaction L-aspartate + NH4(+) + ATP = L-asparagine + AMP + diphosphate + H(+). Its pathway is amino-acid biosynthesis; L-asparagine biosynthesis; L-asparagine from L-aspartate (ammonia route): step 1/1. This is Aspartate--ammonia ligase from Clostridium perfringens (strain ATCC 13124 / DSM 756 / JCM 1290 / NCIMB 6125 / NCTC 8237 / Type A).